A 362-amino-acid polypeptide reads, in one-letter code: N5-carboxyaminoimidazole ribonucleotide synthase (362 aa).

ATP-binding positions include arginine 108, lysine 148, 153 to 159, 185 to 188, glutamate 193, histidine 216, and 270 to 271; these read GYDGKGQ, EGFV, and NE. The 189-residue stretch at 112–300 folds into the ATP-grasp domain; that stretch reads KQFLNESGIE…QFEQHIRAVA (189 aa).

This sequence belongs to the PurK/PurT family. Homodimer.

The catalysed reaction is 5-amino-1-(5-phospho-beta-D-ribosyl)imidazole + hydrogencarbonate + ATP = 5-carboxyamino-1-(5-phospho-D-ribosyl)imidazole + ADP + phosphate + 2 H(+). It participates in purine metabolism; IMP biosynthesis via de novo pathway; 5-amino-1-(5-phospho-D-ribosyl)imidazole-4-carboxylate from 5-amino-1-(5-phospho-D-ribosyl)imidazole (N5-CAIR route): step 1/2. Catalyzes the ATP-dependent conversion of 5-aminoimidazole ribonucleotide (AIR) and HCO(3)(-) to N5-carboxyaminoimidazole ribonucleotide (N5-CAIR). The chain is N5-carboxyaminoimidazole ribonucleotide synthase from Brucella melitensis biotype 1 (strain ATCC 23456 / CCUG 17765 / NCTC 10094 / 16M).